A 315-amino-acid polypeptide reads, in one-letter code: Aspartate carbamoyltransferase catalytic subunit (315 aa).

Carbamoyl phosphate contacts are provided by arginine 64 and threonine 65. Lysine 93 is an L-aspartate binding site. Residues arginine 114, histidine 142, and glutamine 145 each coordinate carbamoyl phosphate. L-aspartate contacts are provided by arginine 175 and arginine 237. Carbamoyl phosphate contacts are provided by leucine 276 and proline 277.

The protein belongs to the aspartate/ornithine carbamoyltransferase superfamily. ATCase family. Heterooligomer of catalytic and regulatory chains.

The enzyme catalyses carbamoyl phosphate + L-aspartate = N-carbamoyl-L-aspartate + phosphate + H(+). The protein operates within pyrimidine metabolism; UMP biosynthesis via de novo pathway; (S)-dihydroorotate from bicarbonate: step 2/3. Catalyzes the condensation of carbamoyl phosphate and aspartate to form carbamoyl aspartate and inorganic phosphate, the committed step in the de novo pyrimidine nucleotide biosynthesis pathway. The chain is Aspartate carbamoyltransferase catalytic subunit from Thermofilum pendens (strain DSM 2475 / Hrk 5).